The sequence spans 1097 residues: Leukemia inhibitory factor receptor (1097 aa).

Residues 1–44 form the signal peptide; it reads MMDIYVCLKRPSWMVDNKRMRTASNFQWLLSTFILLYLMNQVNS. The Extracellular segment spans residues 45–833; the sequence is QKKGAPHDLK…SMYVVTKENS (789 aa). The region spanning 49–138 is the Fibronectin type-III 1 domain; it reads APHDLKCVTN…EQNVSLIPDT (90 aa). 2 disulfide bridges follow: cysteine 55–cysteine 65 and cysteine 82–cysteine 90. Residues asparagine 64, asparagine 85, asparagine 131, asparagine 143, asparagine 191, asparagine 243, and asparagine 303 are each glycosylated (N-linked (GlcNAc...) asparagine). The cysteines at positions 213 and 270 are disulfide-linked. 5 Fibronectin type-III domains span residues 335-434, 435-534, 538-629, 627-719, and 724-833; these read TPQQ…VYPH, TPTS…TEAS, GPDT…IPND, PNDD…IGYI, and PIVA…KENS. A disulfide bridge connects residues cysteine 341 and cysteine 351. Residues asparagine 390, asparagine 407, asparagine 426, asparagine 445, asparagine 481, and asparagine 489 are each glycosylated (N-linked (GlcNAc...) asparagine). Cysteine 466 and cysteine 511 are oxidised to a cystine. The WSXWS motif motif lies at 519–523; the sequence is WSKWS. Asparagine 572, asparagine 652, asparagine 663, asparagine 680, asparagine 729, and asparagine 787 each carry an N-linked (GlcNAc...) asparagine glycan. The chain crosses the membrane as a helical span at residues 834–858; that stretch reads VGLIIAILIPVAVAVIVGVVTSILC. At 859 to 1097 the chain is on the cytoplasmic side; it reads YRKREWIKET…TNFFQNKPND (239 aa). A Box 1 motif motif is present at residues 869–877; that stretch reads FYPDIPNPE. Serine 927 is modified (phosphoserine). Residues 983–1005 are disordered; the sequence is PQAKPEEEQENDPVGGAGYKPQM. Residue serine 1044 is modified to Phosphoserine. A disordered region spans residues 1066 to 1097; that stretch reads RQFLIPPKDEDSPKSNGGGWSFTNFFQNKPND. Over residues 1086 to 1097 the composition is skewed to polar residues; the sequence is SFTNFFQNKPND.

The protein belongs to the type I cytokine receptor family. Type 2 subfamily. As to quaternary structure, heterodimer composed of LIFR and IL6ST. The heterodimer formed by LIFR and IL6ST interacts with the complex formed by CNTF and CNTFR.

The protein localises to the cell membrane. It is found in the secreted. Functionally, signal-transducing molecule. May have a common pathway with IL6ST. The soluble form inhibits the biological activity of LIF by blocking its binding to receptors on target cells. This chain is Leukemia inhibitory factor receptor (LIFR), found in Homo sapiens (Human).